The chain runs to 282 residues: Pantothenate synthetase (282 aa).

30–37 (MGYLHEGH) lines the ATP pocket. H37 acts as the Proton donor in catalysis. Q61 is a binding site for (R)-pantoate. Q61 contacts beta-alanine. 147–150 (GMKD) contributes to the ATP binding site. (R)-pantoate is bound at residue Q153. Residues V176 and 184–187 (KSSR) contribute to the ATP site.

It belongs to the pantothenate synthetase family. As to quaternary structure, homodimer.

The protein localises to the cytoplasm. The enzyme catalyses (R)-pantoate + beta-alanine + ATP = (R)-pantothenate + AMP + diphosphate + H(+). The protein operates within cofactor biosynthesis; (R)-pantothenate biosynthesis; (R)-pantothenate from (R)-pantoate and beta-alanine: step 1/1. In terms of biological role, catalyzes the condensation of pantoate with beta-alanine in an ATP-dependent reaction via a pantoyl-adenylate intermediate. This Geobacillus sp. (strain WCH70) protein is Pantothenate synthetase.